An 835-amino-acid chain; its full sequence is Protein bicaudal D homolog 1 (835 aa).

Residues 1–264 (MAAEEALKTV…YINLSDSHIS (264 aa)) adopt a coiled-coil conformation. The segment at 278-297 (EPNNDDKMNGHIHGPLGKLN) is disordered. The stretch at 320-519 (ELNISEIQKL…TFSEELAQLY (200 aa)) forms a coiled coil. Disordered regions lie at residues 545–616 (RSGS…LDTS) and 800–835 (DHEQ…SAHN). The segment covering 557–572 (GLLSPRLSRRGVSSPV) has biased composition (low complexity). Residues 581 to 590 (VSKENTETSK) are compositionally biased toward basic and acidic residues. The span at 591–604 (EPSPTKTPTISPVI) shows a compositional bias: low complexity. The stretch at 663–803 (IDKDKEALME…LEDLEFDHEQ (141 aa)) forms a coiled coil. The segment at 663–803 (IDKDKEALME…LEDLEFDHEQ (141 aa)) is interaction with RAB6A.

This sequence belongs to the BicD family. Interacts with RAB6A. Interacts (via C-terminus) with RAB6B (GTP-bound); the interaction is direct. Interacts with CLIP-115 and KIFC2. Expressed in the brain, heart and skeletal muscle.

The protein localises to the golgi apparatus. Functionally, regulates coat complex coatomer protein I (COPI)-independent Golgi-endoplasmic reticulum transport by recruiting the dynein-dynactin motor complex. This Mus musculus (Mouse) protein is Protein bicaudal D homolog 1 (Bicd1).